Here is a 486-residue protein sequence, read N- to C-terminus: Protein ZINC INDUCED FACILITATOR 1 (486 aa).

12 helical membrane-spanning segments follow: residues 41–61 (FVWI…PFLY), 82–102 (FVGC…GIVA), 109–129 (PIIL…GLSS), 131–151 (FWMA…LGTM), 170–190 (AVST…GFLA), 212–232 (ALPC…CCFI), 288–308 (IIVY…FALW), 327–347 (TVLA…YPLA), 362–384 (ALMI…SLSL), 391–408 (ILIN…LILQ), 423–443 (IAMT…GILF), and 461–481 (VFFV…KPFL).

It belongs to the major facilitator superfamily. Strongly expressed in developing leaves, differentiating zones of root tips and sepals of developing flowers. Restricted to vascular tissues in older leaves, mature roots, flowers, anthers and filaments. Not expressed in developing anthers.

Its subcellular location is the vacuole membrane. Functionally, major facilitator superfamily (MFS) transporter involved in zinc tolerance by participating in vacuolar sequestration of zinc. In Arabidopsis thaliana (Mouse-ear cress), this protein is Protein ZINC INDUCED FACILITATOR 1 (ZIF1).